The chain runs to 115 residues: Peptidyl-tRNA hydrolase (115 aa).

Belongs to the PTH2 family.

The protein resides in the cytoplasm. It catalyses the reaction an N-acyl-L-alpha-aminoacyl-tRNA + H2O = an N-acyl-L-amino acid + a tRNA + H(+). The natural substrate for this enzyme may be peptidyl-tRNAs which drop off the ribosome during protein synthesis. This chain is Peptidyl-tRNA hydrolase, found in Methanocaldococcus jannaschii (strain ATCC 43067 / DSM 2661 / JAL-1 / JCM 10045 / NBRC 100440) (Methanococcus jannaschii).